The chain runs to 246 residues: Probable transcriptional regulatory protein KPK_1906 (246 aa).

It belongs to the TACO1 family.

It is found in the cytoplasm. This chain is Probable transcriptional regulatory protein KPK_1906, found in Klebsiella pneumoniae (strain 342).